The chain runs to 446 residues: C4-dicarboxylate transport protein (446 aa).

The next 9 helical transmembrane spans lie at 20–40, 56–76, 91–111, 160–180, 200–220, 233–253, 319–339, 344–364, and 367–387; these read HLYVQVLAAIAIGILLGHFYP, LVKMVIAPVIFLTVVTGIAGM, IYFLTFSTLALIIGLIIANVV, GDILQVLFFSVLFGIALAGVG, LVHILMKAAPIGAFGAMAFTI, FLILTFYITSFLFVVVVLGLV, IYMTLAALFIAQATDIHLSLG, LLLVAMLSSKGAAGITGAGFI, and AATLSVVPTVPLAGMALILGI.

Belongs to the dicarboxylate/amino acid:cation symporter (DAACS) (TC 2.A.23) family.

It is found in the cell inner membrane. Its function is as follows. Responsible for the transport of dicarboxylates such as succinate, fumarate, and malate from the periplasm across the membrane. This Azorhizobium caulinodans (strain ATCC 43989 / DSM 5975 / JCM 20966 / LMG 6465 / NBRC 14845 / NCIMB 13405 / ORS 571) protein is C4-dicarboxylate transport protein.